Here is a 543-residue protein sequence, read N- to C-terminus: Carboxypeptidase Y homolog A (543 aa).

Residues 1 to 17 (MRVLPATLLVGAATAAV) form the signal peptide. Positions 18–124 (PPFQQILGLP…KLEAYDLRVK (107 aa)) are excised as a propeptide. Intrachain disulfides connect Cys179–Cys419, Cys313–Cys327, Cys337–Cys360, Cys344–Cys353, and Cys382–Cys389. Asn210 carries an N-linked (GlcNAc...) asparagine glycan. The active site involves Ser266. Asp458 is a catalytic residue. A glycan (N-linked (GlcNAc...) asparagine) is linked at Asn509. The active site involves His520.

It belongs to the peptidase S10 family.

Its subcellular location is the vacuole. The enzyme catalyses Release of a C-terminal amino acid with broad specificity.. Its function is as follows. Vacuolar carboxypeptidase involved in degradation of small peptides. Digests preferentially peptides containing an aliphatic or hydrophobic residue in P1' position, as well as methionine, leucine or phenylalanine in P1 position of ester substrate. This chain is Carboxypeptidase Y homolog A (cpyA), found in Aspergillus clavatus (strain ATCC 1007 / CBS 513.65 / DSM 816 / NCTC 3887 / NRRL 1 / QM 1276 / 107).